A 248-amino-acid polypeptide reads, in one-letter code: MTSHPRDAPQFYLTAPSPCPYLPGQYERKVFTHLVGRRARDLNEILTQGGFRRSQTIAYRPACETCRACISVRVIVGDFVPSASQRRVMRRNRDLVGQPQPNRPASEQYALFRRYLDARHGDGGMVDMTVLDYAMMVEDSHVETHLVVYRKRGPDTAINGRGVGAPIAICLTDVLSDGLSMVYSFYEPSEADRSLGTYMILDHIERARLLGLPYLYLGYWVEGSRKMDYKAKFGPQERLMPQGWVRVE.

It belongs to the R-transferase family. Bpt subfamily.

It is found in the cytoplasm. The catalysed reaction is N-terminal L-glutamyl-[protein] + L-leucyl-tRNA(Leu) = N-terminal L-leucyl-L-glutamyl-[protein] + tRNA(Leu) + H(+). The enzyme catalyses N-terminal L-aspartyl-[protein] + L-leucyl-tRNA(Leu) = N-terminal L-leucyl-L-aspartyl-[protein] + tRNA(Leu) + H(+). Functionally, functions in the N-end rule pathway of protein degradation where it conjugates Leu from its aminoacyl-tRNA to the N-termini of proteins containing an N-terminal aspartate or glutamate. This Methylobacterium nodulans (strain LMG 21967 / CNCM I-2342 / ORS 2060) protein is Aspartate/glutamate leucyltransferase.